The chain runs to 387 residues: Succinate--CoA ligase [ADP-forming] subunit beta (387 aa).

The 228-residue stretch at 9–236 (KELFAKHNVP…KDATDPLELK (228 aa)) folds into the ATP-grasp domain. ATP contacts are provided by residues K45, 52–54 (GRG), S94, and E99. Residues N191 and D205 each contribute to the Mg(2+) site. Substrate-binding positions include N256 and 318–320 (GIT).

This sequence belongs to the succinate/malate CoA ligase beta subunit family. Heterotetramer of two alpha and two beta subunits. Mg(2+) is required as a cofactor.

The catalysed reaction is succinate + ATP + CoA = succinyl-CoA + ADP + phosphate. The enzyme catalyses GTP + succinate + CoA = succinyl-CoA + GDP + phosphate. Its pathway is carbohydrate metabolism; tricarboxylic acid cycle; succinate from succinyl-CoA (ligase route): step 1/1. Succinyl-CoA synthetase functions in the citric acid cycle (TCA), coupling the hydrolysis of succinyl-CoA to the synthesis of either ATP or GTP and thus represents the only step of substrate-level phosphorylation in the TCA. The beta subunit provides nucleotide specificity of the enzyme and binds the substrate succinate, while the binding sites for coenzyme A and phosphate are found in the alpha subunit. In Mycolicibacterium vanbaalenii (strain DSM 7251 / JCM 13017 / BCRC 16820 / KCTC 9966 / NRRL B-24157 / PYR-1) (Mycobacterium vanbaalenii), this protein is Succinate--CoA ligase [ADP-forming] subunit beta.